Here is a 261-residue protein sequence, read N- to C-terminus: Arcelin-5B (261 aa).

The signal sequence occupies residues 1–21 (MASSKLLSLALFLVLLTHANS). 2 N-linked (GlcNAc...) asparagine glycosylation sites follow: Asn91 and Asn100. Residues Cys167 and Cys203 are joined by a disulfide bond.

This sequence belongs to the leguminous lectin family. In terms of assembly, monomer.

Functionally, seed storage. This carbohydrate-binding lectin has toxic effects on bean bruchid pests. In Phaseolus vulgaris (Kidney bean), this protein is Arcelin-5B (ARC5B).